A 158-amino-acid chain; its full sequence is Lipoprotein signal peptidase (158 aa).

A run of 4 helical transmembrane segments spans residues 7–27 (LFWI…YWVV), 38–58 (ILPG…FSLF), 67–87 (WLSL…PVLD), and 95–115 (GLIL…GYVV). Residues Asp-116 and Asp-132 contribute to the active site. Residues 125–145 (FAVFNMADSFISIGIVCLLLA) traverse the membrane as a helical segment.

This sequence belongs to the peptidase A8 family.

Its subcellular location is the cell inner membrane. The enzyme catalyses Release of signal peptides from bacterial membrane prolipoproteins. Hydrolyzes -Xaa-Yaa-Zaa-|-(S,diacylglyceryl)Cys-, in which Xaa is hydrophobic (preferably Leu), and Yaa (Ala or Ser) and Zaa (Gly or Ala) have small, neutral side chains.. It participates in protein modification; lipoprotein biosynthesis (signal peptide cleavage). Functionally, this protein specifically catalyzes the removal of signal peptides from prolipoproteins. The sequence is that of Lipoprotein signal peptidase from Nostoc sp. (strain PCC 7120 / SAG 25.82 / UTEX 2576).